The sequence spans 227 residues: Cytochrome c oxidase subunit 2 (227 aa).

Residues 1–14 (MAYPFQLGLQDATS) lie on the Mitochondrial intermembrane side of the membrane. Residues 15–45 (PIMEELLHFHDHTLMIVFLISSLVLYIISLM) traverse the membrane as a helical segment. Residues 46–59 (LTTKLTHTSTMDAQ) lie on the Mitochondrial matrix side of the membrane. The helical transmembrane segment at 60-87 (EVETVWTILPAIILILIALPSLRILYMM) threads the bilayer. Topologically, residues 88 to 227 (DEINNPSLTV…YFETWSALMV (140 aa)) are mitochondrial intermembrane. H161, C196, E198, C200, H204, and M207 together coordinate Cu cation. Mg(2+) is bound at residue E198. Y218 carries the phosphotyrosine modification.

Belongs to the cytochrome c oxidase subunit 2 family. In terms of assembly, component of the cytochrome c oxidase (complex IV, CIV), a multisubunit enzyme composed of 14 subunits. The complex is composed of a catalytic core of 3 subunits MT-CO1, MT-CO2 and MT-CO3, encoded in the mitochondrial DNA, and 11 supernumerary subunits COX4I, COX5A, COX5B, COX6A, COX6B, COX6C, COX7A, COX7B, COX7C, COX8 and NDUFA4, which are encoded in the nuclear genome. The complex exists as a monomer or a dimer and forms supercomplexes (SCs) in the inner mitochondrial membrane with NADH-ubiquinone oxidoreductase (complex I, CI) and ubiquinol-cytochrome c oxidoreductase (cytochrome b-c1 complex, complex III, CIII), resulting in different assemblies (supercomplex SCI(1)III(2)IV(1) and megacomplex MCI(2)III(2)IV(2)). Found in a complex with TMEM177, COA6, COX18, COX20, SCO1 and SCO2. Interacts with TMEM177 in a COX20-dependent manner. Interacts with COX20. Interacts with COX16. Cu cation serves as cofactor.

It is found in the mitochondrion inner membrane. The catalysed reaction is 4 Fe(II)-[cytochrome c] + O2 + 8 H(+)(in) = 4 Fe(III)-[cytochrome c] + 2 H2O + 4 H(+)(out). In terms of biological role, component of the cytochrome c oxidase, the last enzyme in the mitochondrial electron transport chain which drives oxidative phosphorylation. The respiratory chain contains 3 multisubunit complexes succinate dehydrogenase (complex II, CII), ubiquinol-cytochrome c oxidoreductase (cytochrome b-c1 complex, complex III, CIII) and cytochrome c oxidase (complex IV, CIV), that cooperate to transfer electrons derived from NADH and succinate to molecular oxygen, creating an electrochemical gradient over the inner membrane that drives transmembrane transport and the ATP synthase. Cytochrome c oxidase is the component of the respiratory chain that catalyzes the reduction of oxygen to water. Electrons originating from reduced cytochrome c in the intermembrane space (IMS) are transferred via the dinuclear copper A center (CU(A)) of subunit 2 and heme A of subunit 1 to the active site in subunit 1, a binuclear center (BNC) formed by heme A3 and copper B (CU(B)). The BNC reduces molecular oxygen to 2 water molecules using 4 electrons from cytochrome c in the IMS and 4 protons from the mitochondrial matrix. In Canis mesomelas elongae (Eastern African black-backed jackal), this protein is Cytochrome c oxidase subunit 2 (MT-CO2).